Reading from the N-terminus, the 73-residue chain is Large ribosomal subunit protein bL31 (73 aa).

The protein belongs to the bacterial ribosomal protein bL31 family. Type A subfamily. As to quaternary structure, part of the 50S ribosomal subunit.

In terms of biological role, binds the 23S rRNA. The chain is Large ribosomal subunit protein bL31 from Bartonella bacilliformis (strain ATCC 35685 / KC583 / Herrer 020/F12,63).